Consider the following 83-residue polypeptide: Small ribosomal subunit protein eS21 (83 aa).

It belongs to the eukaryotic ribosomal protein eS21 family. As to quaternary structure, component of the 40S small ribosomal subunit. Interacts with sta.

It localises to the cytoplasm. Its subcellular location is the cytosol. The protein localises to the rough endoplasmic reticulum. May be an associated component of the ribosome rather than a core structural subunit. May act as a translation initiation factor. Has a role in regulation of cell proliferation in the hematopoietic organs and the imaginal disks of larva. The polypeptide is Small ribosomal subunit protein eS21 (RpS21) (Drosophila erecta (Fruit fly)).